The primary structure comprises 391 residues: Dual-specificity RNA methyltransferase RlmN (391 aa).

Catalysis depends on glutamate 115, which acts as the Proton acceptor. The region spanning 121–363 (EENRGTLCIS…SPIRTPRGED (243 aa)) is the Radical SAM core domain. The cysteines at positions 128 and 368 are disulfide-linked. Cysteine 135, cysteine 139, and cysteine 142 together coordinate [4Fe-4S] cluster. Residues 194–195 (GE), serine 226, 248–250 (SFH), and asparagine 325 contribute to the S-adenosyl-L-methionine site. Cysteine 368 functions as the S-methylcysteine intermediate in the catalytic mechanism.

Belongs to the radical SAM superfamily. RlmN family. The cofactor is [4Fe-4S] cluster.

Its subcellular location is the cytoplasm. The catalysed reaction is adenosine(2503) in 23S rRNA + 2 reduced [2Fe-2S]-[ferredoxin] + 2 S-adenosyl-L-methionine = 2-methyladenosine(2503) in 23S rRNA + 5'-deoxyadenosine + L-methionine + 2 oxidized [2Fe-2S]-[ferredoxin] + S-adenosyl-L-homocysteine. The enzyme catalyses adenosine(37) in tRNA + 2 reduced [2Fe-2S]-[ferredoxin] + 2 S-adenosyl-L-methionine = 2-methyladenosine(37) in tRNA + 5'-deoxyadenosine + L-methionine + 2 oxidized [2Fe-2S]-[ferredoxin] + S-adenosyl-L-homocysteine. Functionally, specifically methylates position 2 of adenine 2503 in 23S rRNA and position 2 of adenine 37 in tRNAs. m2A2503 modification seems to play a crucial role in the proofreading step occurring at the peptidyl transferase center and thus would serve to optimize ribosomal fidelity. The sequence is that of Dual-specificity RNA methyltransferase RlmN from Paracoccus denitrificans (strain Pd 1222).